A 561-amino-acid polypeptide reads, in one-letter code: MTHLKITGMTCDSCAAHVKEALEKVPGVQSALVSYPKGTAQLAIVPGTSPDALTAAVAGLGYKATLADAPLADNRVGLLDKVRGWMAAAEKHSGNEPPVQVAVIGSGGAAMAAALKAVEQGAQVTLIERGTIGGTCVNVGCVPSKIMIRAAHIAHLRRESPFDGGIAATVPTIDRSKLLAQQQARVDELRHAKYEGILGGNPAITVVHGEARFKDDQSLTVRLNEGGERVVMFDRCLVATGASPAVPPIPGLKESPYWTSTEALASDTIPERLAVIGSSVVALELAQAFARLGSKVTVLARNTLFFREDPAIGEAVTAAFRAEGIEVLEHTQASQVAHMDGEFVLTTTHGELRADKLLVATGRTPNTRSLALDAAGVTVNAQGAIVIDQGMRTSNPNIYAAGDCTDQPQFVYVAAAAGTRAAINMTGGDAALDLTAMPAVVFTDPQVATVGYSEAEAHHDGIETDSRTLTLDNVPRALANFDTRGFIKLVIEEGSHRLIGVQAVAPEAGELIQTAALAIRNRMTVQELADQLFPYLTMVEGLKLAAQTFNKDVKQLSCCAG.

The 64-residue stretch at 2–65 (THLKITGMTC…AVAGLGYKAT (64 aa)) folds into the HMA domain. Residues Cys-11 and Cys-14 each contribute to the a metal cation site. Residues Ala-110, Gly-130, and Thr-135 each coordinate FAD. Cys-136 and Cys-141 are joined by a disulfide. FAD-binding residues include Lys-145, Ala-211, Asp-403, and Val-411. Hg(2+) contacts are provided by Cys-558 and Cys-559.

It belongs to the class-I pyridine nucleotide-disulfide oxidoreductase family. In terms of assembly, homodimer. The cofactor is FAD.

It catalyses the reaction Hg + NADP(+) + H(+) = Hg(2+) + NADPH. In terms of biological role, resistance to Hg(2+) in bacteria appears to be governed by a specialized system which includes mercuric reductase. MerA protein is responsible for volatilizing mercury as Hg(0). Plays a pivotal role in mercury resistance under thiol-depleted conditions and cell protection. Protects cells under thiol-depleted conditions. The polypeptide is Mercuric reductase (merA) (Pseudomonas aeruginosa).